Reading from the N-terminus, the 109-residue chain is uncharacterized protein (109 aa).

A signal peptide spans 1 to 19 (MKKFALLAGLFVFAPMTWA).

This is an uncharacterized protein from Escherichia coli O6:H1 (strain CFT073 / ATCC 700928 / UPEC).